Reading from the N-terminus, the 254-residue chain is Triosephosphate isomerase (254 aa).

Residue 10–12 (NWK) participates in substrate binding. Histidine 99 serves as the catalytic Electrophile. Catalysis depends on glutamate 169, which acts as the Proton acceptor. Residues glycine 175, serine 215, and 236–237 (GG) each bind substrate.

The protein belongs to the triosephosphate isomerase family. In terms of assembly, homodimer.

The protein localises to the cytoplasm. It catalyses the reaction D-glyceraldehyde 3-phosphate = dihydroxyacetone phosphate. Its pathway is carbohydrate biosynthesis; gluconeogenesis. The protein operates within carbohydrate degradation; glycolysis; D-glyceraldehyde 3-phosphate from glycerone phosphate: step 1/1. In terms of biological role, involved in the gluconeogenesis. Catalyzes stereospecifically the conversion of dihydroxyacetone phosphate (DHAP) to D-glyceraldehyde-3-phosphate (G3P). This is Triosephosphate isomerase from Chlamydia felis (strain Fe/C-56) (Chlamydophila felis).